Reading from the N-terminus, the 174-residue chain is Chaperonin-like RBCX protein 1, chloroplastic (174 aa).

Residues 1 to 45 (MESSSSLLHHSYLSYLNPKFGKRPLVSYPLMQSSRKCKQTRICSN) constitute a chloroplast transit peptide.

Belongs to the RbcX family. As to quaternary structure, homodimer. Interacts with rbcL, atpB and THI1.

It localises to the plastid. The protein localises to the chloroplast. Its function is as follows. Chaperone involved in RuBisCO assembly process. The protein is Chaperonin-like RBCX protein 1, chloroplastic of Arabidopsis thaliana (Mouse-ear cress).